The primary structure comprises 368 residues: Propane 2-monooxygenase, hydroxylase component small subunit (368 aa).

This sequence belongs to the TmoE/XamoE family. In terms of assembly, the propane 2-monooxygenase multicomponent enzyme system is composed of an electron transfer component and a monooxygenase component interacting with the effector protein PrmD. The electron transfer component is composed of a reductase (PrmB), and the monooxygenase component is formed by a large subunit (PrmA) and a small subunit (PrmC). Probably requires the presence of the chaperonin-like protein PrmG to ensure a productive folding, resulting of a soluble PrmC, which leads to the active form of PrmABCD.

It carries out the reaction propane + NADH + O2 + H(+) = propan-2-ol + NAD(+) + H2O. Its function is as follows. Component of the propane 2-monooxygenase multicomponent enzyme system which is involved in the degradation of propane via the O2-dependent hydroxylation of propane. Also able to catalyze the oxidation the water contaminant N-nitrosodimethylamine (NDMA). This chain is Propane 2-monooxygenase, hydroxylase component small subunit, found in Rhodococcus jostii (strain RHA1).